A 409-amino-acid polypeptide reads, in one-letter code: Major capsid protein (409 aa).

This sequence belongs to the lambda phage major capsid protein family. In terms of assembly, homomultimer. Interacts with the portal protein. Interacts with the decoration protein.

The protein localises to the virion. It is found in the host cytoplasm. Assembles to form an icosahedric capsid shell with a T=7 symmetry although with a diameter of about 82 nm, which is a larger volume than the usual T=7 capsids. A dramatic reconfiguration of the capsid shell that expands the procaspid from a diameter of 66 nm to a supersized capsid of 82 nm, allows packaging of the large viral DNA genome. The capsid decoration protein binds the expanded capsid and stabilizes it. The sequence is that of Major capsid protein from Thermus virus P23-45 (Thermus thermophilus phage P23-45).